The primary structure comprises 584 residues: Aspartate--tRNA(Asp/Asn) ligase (584 aa).

Glutamate 174 serves as a coordination point for L-aspartate. The aspartate stretch occupies residues 198 to 201 (QLFK). Arginine 220 contacts L-aspartate. ATP-binding positions include 220–222 (RDE) and glutamine 229. Histidine 447 contacts L-aspartate. Glutamate 480 contacts ATP. Residue arginine 487 participates in L-aspartate binding. ATP is bound at residue 532-535 (GFDR).

Belongs to the class-II aminoacyl-tRNA synthetase family. Type 1 subfamily. Homodimer.

The protein resides in the cytoplasm. The enzyme catalyses tRNA(Asx) + L-aspartate + ATP = L-aspartyl-tRNA(Asx) + AMP + diphosphate. Aspartyl-tRNA synthetase with relaxed tRNA specificity since it is able to aspartylate not only its cognate tRNA(Asp) but also tRNA(Asn). Reaction proceeds in two steps: L-aspartate is first activated by ATP to form Asp-AMP and then transferred to the acceptor end of tRNA(Asp/Asn). The chain is Aspartate--tRNA(Asp/Asn) ligase from Endomicrobium trichonymphae.